The chain runs to 120 residues: MFLLTGYEYFLGFLLIAAAVPILALVTNLIVAPKGRTGERKLTYESGMEPIGGAWIQFNIRYYMFALVFVIFDVETVFLYPWAVAFNRLGLLAFIEALIFIAILVIALAYAWRKGALEWS.

3 consecutive transmembrane segments (helical) span residues 10–30, 64–84, and 89–109; these read FLGF…TNLI, MFAL…PWAV, and LGLL…IALA.

It belongs to the complex I subunit 3 family. In terms of assembly, NDH-1 can be composed of about 15 different subunits; different subcomplexes with different compositions have been identified which probably have different functions.

Its subcellular location is the cellular thylakoid membrane. The catalysed reaction is a plastoquinone + NADH + (n+1) H(+)(in) = a plastoquinol + NAD(+) + n H(+)(out). The enzyme catalyses a plastoquinone + NADPH + (n+1) H(+)(in) = a plastoquinol + NADP(+) + n H(+)(out). In terms of biological role, NDH-1 shuttles electrons from an unknown electron donor, via FMN and iron-sulfur (Fe-S) centers, to quinones in the respiratory and/or the photosynthetic chain. The immediate electron acceptor for the enzyme in this species is believed to be plastoquinone. Couples the redox reaction to proton translocation, and thus conserves the redox energy in a proton gradient. Cyanobacterial NDH-1 also plays a role in inorganic carbon-concentration. This chain is NAD(P)H-quinone oxidoreductase subunit 3, found in Prochlorococcus marinus (strain MIT 9312).